The primary structure comprises 431 residues: Nocturnin (431 aa).

A mitochondrion-targeting transit peptide spans 1–75; sequence MFHSPRRLCS…SMGTGTSRLY (75 aa). The span at 20–31 shows a compositional bias: low complexity; the sequence is LRRLPAPGLRRP. Residues 20–41 form a disordered region; it reads LRRLPAPGLRRPLSPPAAVPRP. A compositionally biased stretch (pro residues) spans 32 to 41; the sequence is LSPPAAVPRP. Glu195 contacts Mg(2+). Residues Glu195, 219-221, Asn263, 286-289, and 324-326 each bind substrate; these read KPW, HLKA, and DFN. The interval 343–353 is interaction with PPARG; sequence NLNSAYKLLSA. His414 is a substrate binding site.

The protein belongs to the CCR4/nocturin family. As to quaternary structure, interacts with PPARG. The cofactor is Mg(2+). As to expression, adipose tissue. Expression is higher in subcutaneous adipose tissue as compared to visceral adipose tissue.

Its subcellular location is the cytoplasm. The protein resides in the nucleus. It is found in the perinuclear region. The protein localises to the mitochondrion. It catalyses the reaction NADP(+) + H2O = phosphate + NAD(+). It carries out the reaction NADPH + H2O = phosphate + NADH. Its function is as follows. Phosphatase which catalyzes the conversion of NADP(+) to NAD(+) and of NADPH to NADH. Shows a small preference for NADPH over NADP(+). Represses translation and promotes degradation of target mRNA molecules. Plays an important role in post-transcriptional regulation of metabolic genes under circadian control. Exerts a rhythmic post-transcriptional control of genes necessary for metabolic functions including nutrient absorption, glucose/insulin sensitivity, lipid metabolism, adipogenesis, inflammation and osteogenesis. Plays an important role in favoring adipogenesis over osteoblastogenesis and acts as a key regulator of the adipogenesis/osteogenesis balance. Promotes adipogenesis by facilitating PPARG nuclear translocation which activates its transcriptional activity. Regulates circadian expression of NOS2 in the liver and negatively regulates the circadian expression of IGF1 in the bone. Critical for proper development of early embryos. In Homo sapiens (Human), this protein is Nocturnin.